The sequence spans 632 residues: 1-deoxy-D-xylulose-5-phosphate synthase (632 aa).

Thiamine diphosphate-binding positions include H79 and 120–122; that span reads GHA. D152 lines the Mg(2+) pocket. Residues 153 to 154, N181, F293, and E377 each bind thiamine diphosphate; that span reads GA. N181 is a binding site for Mg(2+).

Belongs to the transketolase family. DXPS subfamily. In terms of assembly, homodimer. It depends on Mg(2+) as a cofactor. Requires thiamine diphosphate as cofactor.

It carries out the reaction D-glyceraldehyde 3-phosphate + pyruvate + H(+) = 1-deoxy-D-xylulose 5-phosphate + CO2. The protein operates within metabolic intermediate biosynthesis; 1-deoxy-D-xylulose 5-phosphate biosynthesis; 1-deoxy-D-xylulose 5-phosphate from D-glyceraldehyde 3-phosphate and pyruvate: step 1/1. In terms of biological role, catalyzes the acyloin condensation reaction between C atoms 2 and 3 of pyruvate and glyceraldehyde 3-phosphate to yield 1-deoxy-D-xylulose-5-phosphate (DXP). This is 1-deoxy-D-xylulose-5-phosphate synthase from Parabacteroides distasonis (strain ATCC 8503 / DSM 20701 / CIP 104284 / JCM 5825 / NCTC 11152).